A 353-amino-acid chain; its full sequence is Probable cytochrome c oxidase subunit 2 (353 aa).

An N-terminal signal peptide occupies residues M1–S42. The next 2 membrane-spanning stretches (helical) occupy residues L63–F83 and L110–V130. Cu cation contacts are provided by H246, C287, C291, and H295.

Belongs to the cytochrome c oxidase subunit 2 family. Cu cation serves as cofactor. Requires heme as cofactor.

It localises to the cell membrane. The enzyme catalyses 4 Fe(II)-[cytochrome c] + O2 + 8 H(+)(in) = 4 Fe(III)-[cytochrome c] + 2 H2O + 4 H(+)(out). Functionally, subunits I and II form the functional core of the enzyme complex. Electrons originating in cytochrome c are transferred via heme a and Cu(A) to the binuclear center formed by heme a3 and Cu(B). This Mycobacterium leprae (strain TN) protein is Probable cytochrome c oxidase subunit 2 (ctaC).